The sequence spans 351 residues: Peroxidase C1B (351 aa).

Positions 1–28 (MHSPSSTSFTWILITLGCLAFYASLSDA) are cleaved as a signal peptide. 4 disulfide bridges follow: Cys39/Cys119, Cys72/Cys77, Cys125/Cys329, and Cys205/Cys237. Asn41 carries N-linked (GlcNAc...) asparagine glycosylation. His70 acts as the Proton acceptor in catalysis. Positions 71, 74, 76, 78, and 80 each coordinate Ca(2+). N-linked (GlcNAc...) asparagine glycosylation occurs at Asn85. Residue Pro167 participates in substrate binding. His198 provides a ligand contact to heme b. Thr199 is a binding site for Ca(2+). Asn214, Asn226, and Asn242 each carry an N-linked (GlcNAc...) asparagine glycan. Ca(2+) contacts are provided by Asp250, Thr253, and Asp258. Asn283 is a glycosylation site (N-linked (GlcNAc...) asparagine).

Belongs to the peroxidase family. Classical plant (class III) peroxidase subfamily. The cofactor is Ca(2+). Heme b serves as cofactor.

The protein localises to the secreted. It is found in the vacuole. The enzyme catalyses 2 a phenolic donor + H2O2 = 2 a phenolic radical donor + 2 H2O. Its function is as follows. Removal of H(2)O(2), oxidation of toxic reductants, biosynthesis and degradation of lignin, suberization, auxin catabolism, response to environmental stresses such as wounding, pathogen attack and oxidative stress. These functions might be dependent on each isozyme/isoform in each plant tissue. In Armoracia rusticana (Horseradish), this protein is Peroxidase C1B (PRXC1B).